Consider the following 93-residue polypeptide: Muconolactone Delta-isomerase (93 aa).

Belongs to the muconolactone Delta-isomerase family. In terms of assembly, homodecamer.

It catalyses the reaction (S)-muconolactone = (4,5-dihydro-5-oxofuran-2-yl)-acetate. It functions in the pathway aromatic compound metabolism; beta-ketoadipate pathway; 5-oxo-4,5-dihydro-2-furylacetate from catechol: step 3/3. In Rhodococcus opacus (Nocardia opaca), this protein is Muconolactone Delta-isomerase (catC).